Reading from the N-terminus, the 135-residue chain is MAEKFDHLEEHLEKFVENIRQLGIIVSDFQPSSQAGLNQKLNFIVTGLQDIDKCRQQLHDITVPLEVFEYIDQGRNPQLYTKECLERALAKNEQVKGKIDTMKKFKSLLIQGLSKVFPEDMAKYRSIRGEDHLPS.

It belongs to the Mediator complex subunit 10 family. Component of the Mediator complex, which is composed of MED1, MED4, MED6, MED7, MED8, MED9, MED10, MED11, MED12, MED13, MED13L, MED14, MED15, MED16, MED17, MED18, MED19, MED20, MED21, MED22, MED23, MED24, MED25, MED26, MED27, MED29, MED30, MED31, CCNC, CDK8 and CDC2L6/CDK11. The MED12, MED13, CCNC and CDK8 subunits form a distinct module termed the CDK8 module. Mediator containing the CDK8 module is less active than Mediator lacking this module in supporting transcriptional activation. Individual preparations of the Mediator complex lacking one or more distinct subunits have been variously termed ARC, CRSP, DRIP, PC2, SMCC and TRAP.

It is found in the nucleus. Component of the Mediator complex, a coactivator involved in the regulated transcription of nearly all RNA polymerase II-dependent genes. Mediator functions as a bridge to convey information from gene-specific regulatory proteins to the basal RNA polymerase II transcription machinery. Mediator is recruited to promoters by direct interactions with regulatory proteins and serves as a scaffold for the assembly of a functional preinitiation complex with RNA polymerase II and the general transcription factors. In Macaca fascicularis (Crab-eating macaque), this protein is Mediator of RNA polymerase II transcription subunit 10 (MED10).